Reading from the N-terminus, the 558-residue chain is Serine palmitoyltransferase 1 (558 aa).

The Lumenal segment spans residues 1 to 49; the sequence is MAHIPEVLPKSIPIPAFIVTTSSYLWYYFNLVLTQIPGGQFIVSYIKKS. The chain crosses the membrane as a helical span at residues 50 to 84; the sequence is HHDDPYRTTVEIGLILYGIIYYLSKPQQKKSLQAQ. Residues 85–341 lie on the Cytoplasmic side of the membrane; sequence KPNLSPQEID…GRGLSEHFNM (257 aa). Thr121 carries the phosphothreonine modification. Residues 342–371 traverse the membrane as a helical segment; sequence DRATAIDITVGSMATALGSTGGFVLGDSVM. At 372-424 the chain is on the lumenal side; the sequence is CLHQRIGSNAYCFSACLPAYTVTSVSKVLKLMDSNNDAVQTLQKLSKSLHDSF. Residues 425-457 traverse the membrane as a helical segment; that stretch reads ASDDSLRSYVIVTSSPVSAVLHLQLTPAYRSRK. Over 458 to 558 the chain is Cytoplasmic; it reads FGYTCEQLFE…ILACCQESNK (101 aa).

Belongs to the class-II pyridoxal-phosphate-dependent aminotransferase family. LCB1 and LCB2 encode essential subunits of the enzyme and form a heterodimer. Component of the SPOTS complex, at least composed of LCB1/2 (LCB1 and/or LCB2), ORM1/2 (ORM1 and/or ORM2), SAC1 and TSC3. Interacts with LCB2 and TSC3. It depends on pyridoxal 5'-phosphate as a cofactor.

The protein resides in the cytoplasm. It localises to the endoplasmic reticulum membrane. The catalysed reaction is L-serine + hexadecanoyl-CoA + H(+) = 3-oxosphinganine + CO2 + CoA. It participates in lipid metabolism; sphingolipid metabolism. In terms of biological role, component of serine palmitoyltransferase (SPT), which catalyzes the committed step in the synthesis of sphingolipids, the condensation of serine with palmitoyl CoA to form the long chain base 3-ketosphinganine. The chain is Serine palmitoyltransferase 1 (LCB1) from Saccharomyces cerevisiae (strain ATCC 204508 / S288c) (Baker's yeast).